The chain runs to 261 residues: MAHQAHSYHMVDPSPWPIFGATAALLTTSGLIMWFHYNSLYLLTLGLLSMFLVMIQWWRDIVRESTFQGHHTPTVQKGLRYGMILFITSEAFFFLGFFWAFFHSSLAPTPELGAQWPPTGINPLNPLEVPLLNTAILLASGVTVTWAHHSITESNRKQAIHALSLTIILGFYFTALQAMEYHEASFSIADGVYGSTFFVATGFHGLHVIIGSSFLTVCLLRLIKFHFTTNHHFGFEAAAWYWHFVDVIWLFLYMSIYWWGS.

Residues 1–15 (MAHQAHSYHMVDPSP) are Mitochondrial matrix-facing. A helical transmembrane segment spans residues 16–34 (WPIFGATAALLTTSGLIMW). Topologically, residues 35–40 (FHYNSL) are mitochondrial intermembrane. Residues 41–66 (YLLTLGLLSMFLVMIQWWRDIVREST) traverse the membrane as a helical segment. At 67–72 (FQGHHT) the chain is on the mitochondrial matrix side. The chain crosses the membrane as a helical span at residues 73–105 (PTVQKGLRYGMILFITSEAFFFLGFFWAFFHSS). The Mitochondrial intermembrane portion of the chain corresponds to 106 to 128 (LAPTPELGAQWPPTGINPLNPLE). A helical transmembrane segment spans residues 129–152 (VPLLNTAILLASGVTVTWAHHSIT). The Mitochondrial matrix portion of the chain corresponds to 153–155 (ESN). Residues 156–183 (RKQAIHALSLTIILGFYFTALQAMEYHE) form a helical membrane-spanning segment. Topologically, residues 184 to 190 (ASFSIAD) are mitochondrial intermembrane. A helical transmembrane segment spans residues 191–223 (GVYGSTFFVATGFHGLHVIIGSSFLTVCLLRLI). Topologically, residues 224–232 (KFHFTTNHH) are mitochondrial matrix. The helical transmembrane segment at 233–256 (FGFEAAAWYWHFVDVIWLFLYMSI) threads the bilayer. Topologically, residues 257–261 (YWWGS) are mitochondrial intermembrane.

This sequence belongs to the cytochrome c oxidase subunit 3 family. Component of the cytochrome c oxidase (complex IV, CIV), a multisubunit enzyme composed of 14 subunits. The complex is composed of a catalytic core of 3 subunits MT-CO1, MT-CO2 and MT-CO3, encoded in the mitochondrial DNA, and 11 supernumerary subunits COX4I, COX5A, COX5B, COX6A, COX6B, COX6C, COX7A, COX7B, COX7C, COX8 and NDUFA4, which are encoded in the nuclear genome. The complex exists as a monomer or a dimer and forms supercomplexes (SCs) in the inner mitochondrial membrane with NADH-ubiquinone oxidoreductase (complex I, CI) and ubiquinol-cytochrome c oxidoreductase (cytochrome b-c1 complex, complex III, CIII), resulting in different assemblies (supercomplex SCI(1)III(2)IV(1) and megacomplex MCI(2)III(2)IV(2)).

It localises to the mitochondrion inner membrane. The catalysed reaction is 4 Fe(II)-[cytochrome c] + O2 + 8 H(+)(in) = 4 Fe(III)-[cytochrome c] + 2 H2O + 4 H(+)(out). Its function is as follows. Component of the cytochrome c oxidase, the last enzyme in the mitochondrial electron transport chain which drives oxidative phosphorylation. The respiratory chain contains 3 multisubunit complexes succinate dehydrogenase (complex II, CII), ubiquinol-cytochrome c oxidoreductase (cytochrome b-c1 complex, complex III, CIII) and cytochrome c oxidase (complex IV, CIV), that cooperate to transfer electrons derived from NADH and succinate to molecular oxygen, creating an electrochemical gradient over the inner membrane that drives transmembrane transport and the ATP synthase. Cytochrome c oxidase is the component of the respiratory chain that catalyzes the reduction of oxygen to water. Electrons originating from reduced cytochrome c in the intermembrane space (IMS) are transferred via the dinuclear copper A center (CU(A)) of subunit 2 and heme A of subunit 1 to the active site in subunit 1, a binuclear center (BNC) formed by heme A3 and copper B (CU(B)). The BNC reduces molecular oxygen to 2 water molecules using 4 electrons from cytochrome c in the IMS and 4 protons from the mitochondrial matrix. This Struthio camelus (Common ostrich) protein is Cytochrome c oxidase subunit 3 (MT-CO3).